The following is a 521-amino-acid chain: MASNSLFSTVTPCQQNFFWDPSTSRRFSPPSSSLQPGKMSDVSPVVAAQQQQQQQQQQQQQQQQQQQQQQQEAAAAAAAAAAAAAAAAAVPRLRPPHDNRTMVEIIADHPAELVRTDSPNFLCSVLPSHWRCNKTLPVAFKVVALGEVPDGTVVTVMAGNDENYSAELRNASAVMKNQVARFNDLRFVGRSGRGKSFTLTITVFTNPPQVATYHRAIKVTVDGPREPRRHRQKLDDSKPSLFSDRLSDLGRIPHPSMRVGVPPQNPRPSLNSAPSPFNPQGQSQITDPRQAQSSPPWSYDQSYPSYLSQMTSPSIHSTTPLSSTRGTGLPAITDVPRRISDDDTATSDFCLWPSTLSKKSQAGASELGPFSDPRQFPSISSLTESRFSNPRMHYPATFTYTPPVTSGMSLGMSATTHYHTYLPPPYPGSSQSQSGPFQTSSTPYLYYGTSSGSYQFPMVPGGDRSPSRMLPPCTTTSNGSTLLNPNLPNQNDGVDADGSHSSSPTVLNSSGRMDESVWRPY.

Disordered stretches follow at residues phenylalanine 18–glutamine 59 and aspartate 222–serine 340. Composition is skewed to low complexity over residues proline 21–serine 33 and alanine 47–glutamine 59. The 129-residue stretch at threonine 101–arginine 229 folds into the Runt domain. Residue lysine 238 forms a Glycyl lysine isopeptide (Lys-Gly) (interchain with G-Cter in SUMO2) linkage. A required for interaction with FOXO1 region spans residues phenylalanine 242–arginine 258. Arginine 267 is modified (asymmetric dimethylarginine). The span at arginine 267–glycine 326 shows a compositional bias: polar residues. Residues proline 336 to threonine 439 are interaction with KAT6A. Phosphoserine is present on serine 340. The segment at arginine 374–arginine 468 is interaction with KAT6B. At serine 451 the chain carries Phosphoserine; by CDK1. Positions proline 460 to tyrosine 521 are disordered. 2 stretches are compositionally biased toward polar residues: residues cysteine 473–aspartate 492 and serine 499–glycine 511. Residues arginine 512–tyrosine 521 show a composition bias toward basic and acidic residues.

Heterodimer of an alpha and a beta subunit. The alpha subunit binds DNA as a monomer and through the Runt domain. DNA-binding is increased by heterodimerization. Interacts with XRCC6 (Ku70) and XRCC5 (Ku80). Interacts with HIVEP3. Interacts with IFI204. Interaction with SATB2; the interaction results in enhanced DNA binding and transactivation by these transcription factors. Binds to HIPK3. Interacts with FOXO1 (via a C-terminal region); the interaction inhibits RUNX2 transcriptional activity towards BGLAP. This interaction is prevented on insulin or IGF1 stimulation as FOXO1 is exported from the nucleus. Interacts with CCNB1, KAT6A and KAT6B. Interacts with FOXP3. Interacts with TMEM119. Interacts with OLFM2. Interacts with IPO7; the interaction inhibits RUNX2 nuclear translocation in osteoblasts. As to quaternary structure, interacts with DDX5. Phosphorylated; probably by MAP kinases (MAPK). Phosphorylation by HIPK3 is required for the SPEN/MINT and FGF2 transactivation during osteoblastic differentiation. Phosphorylation at Ser-451 by CDK1 promotes endothelial cell proliferation required for tumor angiogenesis probably by facilitating cell cycle progression. Isoform 3 is phosphorylated on Ser-340. As to expression, specifically expressed in osteoblasts.

It localises to the nucleus. The protein resides in the cytoplasm. Functionally, transcription factor involved in osteoblastic differentiation and skeletal morphogenesis. Essential for the maturation of osteoblasts and both intramembranous and endochondral ossification. CBF binds to the core site, 5'-PYGPYGGT-3', of a number of enhancers and promoters, including murine leukemia virus, polyomavirus enhancer, T-cell receptor enhancers, osteocalcin, osteopontin, bone sialoprotein, alpha 1(I) collagen, LCK, IL-3 and GM-CSF promoters. In osteoblasts, supports transcription activation: synergizes with SPEN/MINT to enhance FGFR2-mediated activation of the osteocalcin FGF-responsive element (OCFRE). Inhibits KAT6B-dependent transcriptional activation. The polypeptide is Runt-related transcription factor 2 (RUNX2) (Homo sapiens (Human)).